A 170-amino-acid polypeptide reads, in one-letter code: Putative apoptosis inhibitor ORF87 (170 aa).

BIR repeat units lie at residues R22–K92 and R104–S169.

May act as an apoptosis inhibitor. In Ostreid herpesvirus 1 (isolate France) (OsHV-1), this protein is Putative apoptosis inhibitor ORF87.